We begin with the raw amino-acid sequence, 847 residues long: DNA mismatch repair protein MutS (847 aa).

602-609 provides a ligand contact to ATP; sequence GPNMSGKS.

Belongs to the DNA mismatch repair MutS family.

Its function is as follows. This protein is involved in the repair of mismatches in DNA. It is possible that it carries out the mismatch recognition step. This protein has a weak ATPase activity. This is DNA mismatch repair protein MutS from Streptococcus uberis (strain ATCC BAA-854 / 0140J).